A 259-amino-acid polypeptide reads, in one-letter code: ATP synthase subunit b 2 (259 aa).

The helical transmembrane segment at 5–27 threads the bilayer; that stretch reads WFTVSAQAINFLILVALLKRFLY.

Belongs to the ATPase B chain family. F-type ATPases have 2 components, F(1) - the catalytic core - and F(0) - the membrane proton channel. F(1) has five subunits: alpha(3), beta(3), gamma(1), delta(1), epsilon(1). F(0) has three main subunits: a(1), b(2) and c(10-14). The alpha and beta chains form an alternating ring which encloses part of the gamma chain. F(1) is attached to F(0) by a central stalk formed by the gamma and epsilon chains, while a peripheral stalk is formed by the delta and b chains.

It localises to the cell inner membrane. Its function is as follows. F(1)F(0) ATP synthase produces ATP from ADP in the presence of a proton or sodium gradient. F-type ATPases consist of two structural domains, F(1) containing the extramembraneous catalytic core and F(0) containing the membrane proton channel, linked together by a central stalk and a peripheral stalk. During catalysis, ATP synthesis in the catalytic domain of F(1) is coupled via a rotary mechanism of the central stalk subunits to proton translocation. Component of the F(0) channel, it forms part of the peripheral stalk, linking F(1) to F(0). The polypeptide is ATP synthase subunit b 2 (Syntrophotalea carbinolica (strain DSM 2380 / NBRC 103641 / GraBd1) (Pelobacter carbinolicus)).